The sequence spans 373 residues: Queuine tRNA-ribosyltransferase (373 aa).

Asp-90 serves as the catalytic Proton acceptor. Residues Asp-90–Phe-94, Asp-144, Gln-193, and Gly-220 each bind substrate. The interval Gly-251–Asp-257 is RNA binding. The active-site Nucleophile is Asp-270. The segment at Thr-275–Arg-279 is RNA binding; important for wobble base 34 recognition. Zn(2+)-binding residues include Cys-308, Cys-310, Cys-313, and His-339.

Belongs to the queuine tRNA-ribosyltransferase family. Homodimer. Within each dimer, one monomer is responsible for RNA recognition and catalysis, while the other monomer binds to the replacement base PreQ1. Zn(2+) serves as cofactor.

The catalysed reaction is 7-aminomethyl-7-carbaguanine + guanosine(34) in tRNA = 7-aminomethyl-7-carbaguanosine(34) in tRNA + guanine. The protein operates within tRNA modification; tRNA-queuosine biosynthesis. Catalyzes the base-exchange of a guanine (G) residue with the queuine precursor 7-aminomethyl-7-deazaguanine (PreQ1) at position 34 (anticodon wobble position) in tRNAs with GU(N) anticodons (tRNA-Asp, -Asn, -His and -Tyr). Catalysis occurs through a double-displacement mechanism. The nucleophile active site attacks the C1' of nucleotide 34 to detach the guanine base from the RNA, forming a covalent enzyme-RNA intermediate. The proton acceptor active site deprotonates the incoming PreQ1, allowing a nucleophilic attack on the C1' of the ribose to form the product. After dissociation, two additional enzymatic reactions on the tRNA convert PreQ1 to queuine (Q), resulting in the hypermodified nucleoside queuosine (7-(((4,5-cis-dihydroxy-2-cyclopenten-1-yl)amino)methyl)-7-deazaguanosine). The protein is Queuine tRNA-ribosyltransferase of Campylobacter jejuni subsp. jejuni serotype O:23/36 (strain 81-176).